Reading from the N-terminus, the 367-residue chain is Alanine racemase (367 aa).

K40 serves as the catalytic Proton acceptor; specific for D-alanine. K40 carries the N6-(pyridoxal phosphate)lysine modification. A substrate-binding site is contributed by R136. Residue Y263 is the Proton acceptor; specific for L-alanine of the active site. Residue M310 participates in substrate binding.

The protein belongs to the alanine racemase family. The cofactor is pyridoxal 5'-phosphate.

It catalyses the reaction L-alanine = D-alanine. The protein operates within amino-acid biosynthesis; D-alanine biosynthesis; D-alanine from L-alanine: step 1/1. Functionally, catalyzes the interconversion of L-alanine and D-alanine. May also act on other amino acids. The sequence is that of Alanine racemase (alr) from Lactococcus lactis subsp. cremoris (strain SK11).